The primary structure comprises 163 residues: Choriogonadotropin subunit beta variant 2 (163 aa).

The signal sequence occupies residues 1–18 (MSKGLLLLLLLSMGGTWA). Cystine bridges form between C27–C75, C41–C90, C44–C128, C52–C106, C56–C108, and C111–C118. N-linked (GlcNAc...) asparagine glycans are attached at residues N31 and N48. A disordered region spans residues 129 to 163 (DDPRFQASSSSKAPPPSLPSPSRLPGPSDTPILPQ). Residues 141-152 (APPPSLPSPSRL) show a composition bias toward pro residues.

Belongs to the glycoprotein hormones subunit beta family. In terms of tissue distribution, expressed in placenta, testis and pituitary.

It is found in the secreted. In Homo sapiens (Human), this protein is Choriogonadotropin subunit beta variant 2 (CGB2).